Consider the following 63-residue polypeptide: Small ribosomal subunit protein eS17 (63 aa).

Belongs to the eukaryotic ribosomal protein eS17 family.

The polypeptide is Small ribosomal subunit protein eS17 (rps17e) (Haloarcula marismortui (strain ATCC 43049 / DSM 3752 / JCM 8966 / VKM B-1809) (Halobacterium marismortui)).